The primary structure comprises 156 residues: Small ribosomal subunit protein uS7 (156 aa).

Belongs to the universal ribosomal protein uS7 family. Part of the 30S ribosomal subunit. Contacts proteins S9 and S11.

Functionally, one of the primary rRNA binding proteins, it binds directly to 16S rRNA where it nucleates assembly of the head domain of the 30S subunit. Is located at the subunit interface close to the decoding center, probably blocks exit of the E-site tRNA. The chain is Small ribosomal subunit protein uS7 from Nitrosomonas europaea (strain ATCC 19718 / CIP 103999 / KCTC 2705 / NBRC 14298).